Here is a 790-residue protein sequence, read N- to C-terminus: Kinesin-like protein KIF9 (790 aa).

Residues 6 to 340 form the Kinesin motor domain; sequence KVQAFVRVRP…LRFASRMKLV (335 aa). ATP contacts are provided by residues 12–14 and 93–100; these read RVR and GQTGAGKT. Residues 342–442 adopt a coiled-coil conformation; that stretch reads TEPAINEKYD…EQEVESALRR (101 aa). Positions 482–521 are disordered; the sequence is GVAPFSVKPGKKPKTKKTPKDQFSSSARKEGASSPVSGKD. Thr530 bears the Phosphothreonine mark. The disordered stretch occupies residues 547–577; it reads RERETSSIEPLISDSPKEELRAPRPSTPPSR. Residues 600–695 adopt a coiled-coil conformation; that stretch reads KSILNERKKR…YCQRLVDQCR (96 aa).

The protein belongs to the TRAFAC class myosin-kinesin ATPase superfamily. Kinesin family. In terms of assembly, interacts with HYDIN. Highly expressed in the testis (at protein level). Weakly expressed in the brain, thymus, lung and heart.

Its subcellular location is the cytoplasm. It localises to the cytoskeleton. The protein resides in the cell projection. The protein localises to the cilium. It is found in the flagellum. Its subcellular location is the flagellum axoneme. In terms of biological role, essential for normal male fertility and for progressive motility of spermatozoa. The chain is Kinesin-like protein KIF9 (Kif9) from Mus musculus (Mouse).